The chain runs to 449 residues: Exodeoxyribonuclease 7 large subunit (449 aa).

This sequence belongs to the XseA family. As to quaternary structure, heterooligomer composed of large and small subunits.

Its subcellular location is the cytoplasm. The enzyme catalyses Exonucleolytic cleavage in either 5'- to 3'- or 3'- to 5'-direction to yield nucleoside 5'-phosphates.. Bidirectionally degrades single-stranded DNA into large acid-insoluble oligonucleotides, which are then degraded further into small acid-soluble oligonucleotides. In Lacticaseibacillus casei (strain BL23) (Lactobacillus casei), this protein is Exodeoxyribonuclease 7 large subunit.